Reading from the N-terminus, the 165-residue chain is Methylated-DNA--protein-cysteine methyltransferase (165 aa).

Residue C126 is the Nucleophile; methyl group acceptor of the active site.

This sequence belongs to the MGMT family.

The protein resides in the cytoplasm. The enzyme catalyses a 6-O-methyl-2'-deoxyguanosine in DNA + L-cysteinyl-[protein] = S-methyl-L-cysteinyl-[protein] + a 2'-deoxyguanosine in DNA. It carries out the reaction a 4-O-methyl-thymidine in DNA + L-cysteinyl-[protein] = a thymidine in DNA + S-methyl-L-cysteinyl-[protein]. In terms of biological role, involved in the cellular defense against the biological effects of O6-methylguanine (O6-MeG) and O4-methylthymine (O4-MeT) in DNA. Repairs the methylated nucleobase in DNA by stoichiometrically transferring the methyl group to a cysteine residue in the enzyme. This is a suicide reaction: the enzyme is irreversibly inactivated. This Mycobacterium bovis (strain ATCC BAA-935 / AF2122/97) protein is Methylated-DNA--protein-cysteine methyltransferase.